The primary structure comprises 240 residues: RxLR effector protein PexRD20 (240 aa).

The signal sequence occupies residues 1–23 (MRCHYFVLLAVAAFLAGANVAVA). A RxLR-dEER motif is present at residues 43 to 58 (RALRSHTKATDHGEER).

This sequence belongs to the RxLR effector family.

The protein resides in the secreted. The protein localises to the host cytoplasm. It localises to the host nucleus. Its subcellular location is the host nucleolus. Functionally, effector that enhances P.infestans colonization of Nicotiana benthamiana leaves. This Phytophthora infestans (strain T30-4) (Potato late blight agent) protein is RxLR effector protein PexRD20.